We begin with the raw amino-acid sequence, 465 residues long: Serine/threonine-protein kinase AtPK1/AtPK6 (465 aa).

The LVxCxE motif signature appears at 91–96; that stretch reads LVECLE. In terms of domain architecture, Protein kinase spans 134 to 389; the sequence is FEVMKVVGKG…AEEIKQHKWF (256 aa). ATP contacts are provided by residues 140–148 and lysine 163; that span reads VGKGAFGKV. The active-site Proton acceptor is the aspartate 257. Residues 275–301 are activation loop; sequence DFGLAKEFEENTRSNSMCGTTEYMAPE. Serine 290 carries the post-translational modification Phosphoserine; by PDPK1. The 71-residue stretch at 390–460 folds into the AGC-kinase C-terminal domain; that stretch reads KGINWKKLEA…VRPPPSFLHQ (71 aa). Threonine 449 carries the post-translational modification Phosphothreonine; by TOR.

It belongs to the protein kinase superfamily. AGC Ser/Thr protein kinase family. S6 kinase subfamily. As to quaternary structure, interacts with RAPTOR1. Interacts with RBR1-E2FB complex through its LVxCxE motif. Interacts with TAP46. Binds to MRF1. Undergoes serine-specific autophosphorylation. Phosphorylated at Thr-449 by TOR. As to expression, expressed in all tissues.

It is found in the cytoplasm. It localises to the nucleus. It catalyses the reaction L-seryl-[protein] + ATP = O-phospho-L-seryl-[protein] + ADP + H(+). It carries out the reaction L-threonyl-[protein] + ATP = O-phospho-L-threonyl-[protein] + ADP + H(+). Activated by PDK1. Repressed during osmotic stress. Downstream effector of TOR signaling pathway involved in osmotic stress response. Could be involved in the control of plant growth and development. Phosphorylates the ribosomal proteins P14, P16 and S6. Functions as a repressor of cell proliferation and required for maintenance of chromosome stability and ploidy levels through the RBR1-E2F pathway. Mediates the phosphorylation of MRFs (e.g. MRF1). This is Serine/threonine-protein kinase AtPK1/AtPK6 from Arabidopsis thaliana (Mouse-ear cress).